Reading from the N-terminus, the 1827-residue chain is MAKRKFSGLEITLIVLFVIVFIIAIALIAVLATKTPAVEEVNPSSSTPTTTSTTTSTSGSVSCPSELNEVVNERINCIPEQSPTQAICAQRNCCWRPWNNSDIPWCFFVDNHGYNVEGMTTTSTGLEARLNRKSTPTLFGNDINNVLLTTESQTANRLRFKLTDPNNKRYEVPHQFVTEFAGPAATETLYDVQVTENPFSIKVIRKSNNRILFDSSIGPLVYSDQYLQISTRLPSEYMYGFGEHVHKRFRHDLYWKTWPIFTRDQHTDDNNNNLYGHQTFFMCIEDTTGKSFGVFLMNSNAMEIFIQPTPIVTYRVIGGILDFYIFLGDTPEQVVQQYQELIGRPAMPAYWSLGFQLSRWNYNSLDVVKEVVRRNREALIPFDTQVSDIDYMEDKKDFTYDRVAYNGLPDFVQDLHDHGQKYVIILDPAISINRRASGEAYESYDRGNAQNVWVNESDGTTPIVGEVWPGDTVYPDFTSPNCIEWWANECNIFHQEVNYDGLWIDMNEVSSFVQGSNKGCNDNTLNYPPYIPDIVDKLMYSKTLCMDSVQYWGKQYDVHSLYGYSMAIATERAVERVFPNKRSFILTRSTFAGSGRHAAHWLGDNTATWEQMEWSITGMLEFGLFGMPLVGADICGFLAETTEELCRRWMQLGAFYPFSRNHNADGFEHQDPAFFGQDSLLVKSSRHYLNIRYTLLPFLYTLFYKAHAFGETVARPVLHEFYEDTNSWVEDREFLWGPALLITPVLTQGAETVSAYIPDAVWYDYETGAKRPWRKQRVEMSLPADKIGLHLRGGYIIPIQQPAVTTTASRMNPLGLIIALNDDNTAVGDFFWDDGETKDTVQNDNYILYTFAVSNNNLNITCTHELYSEGTTLAFQTIKILGVTETVTQVTVAENNQSMSTHSNFTYDPSNQVLLIENLNFNLGRNFRVQWDQTFLESEKITCYPDADIATQEKCTQRGCIWDTNTVNPRAPECYFPKTDNPYSVSSTQYSPTGITADLQLNPTRTRITLPSEPITNLRVEVKYHKNDMVQFKIFDPQNKRYEVPVPLDIPATPTSTQENRLYDVEIKENPFGIQIRRRSTGKVIWDSCLPGFAFNDQFIQISTRLPSEYIYGFGEAEHTAFKRDLNWHTWGMFTRDQPPGYKLNSYGFHPYYMALEDEGNAHGVLLLNSNAMDVTFMPTPALTYRVIGGILDFYMFLGPTPEVATQQYHEVIGHPVMPPYWSLGFQLCRYGYRNTSEIIELYEGMVAADIPYDVQYTDIDYMERQLDFTIDENFRELPQFVDRIRGEGMRYIIILDPAISGNETRPYPAFDRGEAKDVFVKWPNTSDICWAKVWPDLPNITIDESLTEDEAVNASRAHAAFPDFFRNSTAEWWTREILDFYNNYMKFDGLWIDMNEPSSFVNGTTTNVCRNTELNYPPYFPELTKRTDGLHFRTMCMETEHILSDGSSVLHYDVHNLYGWSQAKPTYDALQKTTGKRGIVISRSTYPTAGRWAGHWLGDNYARWDNMDKSIIGMMEFSLFGISYTGADICGFFNDSEYHLCTRWTQLGAFYPFARNHNIQFTRRQDPVSWNQTFVEMTRNVLNIRYTLLPYFYTQLHEIHAHGGTVIRPLMHEFFDDRTTWDIFLQFLWGPAFMVTPVLEPYTTVVRGYVPNARWFDYHTGEDIGIRGQVQDLTLLMNAINLHVRGGHILPCQEPARTTFLSRQKYMKLIVAADDNHMAQGSLFWDDGDTIDTYERDLYLSVQFNLNKTTLTSTLLKTGYINKTEIRLGYVHVWGIGNTLINEVNLMYNEINYPLIFNQTQAQEILNIDLTAHEVTLDDPIEISWS.

The Cytoplasmic segment spans residues 2 to 12 (AKRKFSGLEIT). Ser7 carries the post-translational modification Phosphoserine; by PKA. The chain crosses the membrane as a helical; Signal-anchor for type II membrane protein span at residues 13–32 (LIVLFVIVFIIAIALIAVLA). Residues 33–1827 (TKTPAVEEVN…LDDPIEISWS (1795 aa)) lie on the Lumenal side of the membrane. The segment at 39–64 (EEVNPSSSTPTTTSTTTSTSGSVSCP) is disordered. Residues 43-64 (PSSSTPTTTSTTTSTSGSVSCP) show a composition bias toward low complexity. The P-type 1 domain maps to 61–110 (VSCPSELNEVVNERINCIPEQSPTQAICAQRNCCWRPWNNSDIPWCFFVD). 3 disulfides stabilise this stretch: Cys63–Cys94, Cys77–Cys93, and Cys88–Cys106. A glycan (N-linked (GlcNAc...) asparagine) is linked at Asn99. The segment at 110 to 1007 (DNHGYNVEGM…DLQLNPTRTR (898 aa)) is isomaltase. Residues Asp264 and Asp388 each coordinate substrate. Tyr391 and Tyr400 each carry sulfotyrosine. Asn455 is a glycosylation site (N-linked (GlcNAc...) asparagine). The Nucleophile; for isomaltase activity role is filled by Asp505. A disulfide bond links Cys520 and Cys545. Residue Arg588 coordinates substrate. Residue Asp604 is the For isomaltase activity of the active site. A disulfide bond links Cys635 and Cys646. His662 lines the substrate pocket. N-linked (GlcNAc...) asparagine glycosylation is found at Asn859, Asn896, and Asn904. The P-type 2 domain occupies 932–978 (DQTFLESEKITCYPDADIATQEKCTQRGCIWDTNTVNPRAPECYFPK). The segment at 1008–1827 (ITLPSEPITN…LDDPIEISWS (820 aa)) is sucrase. Asn1235, Asn1303, Asn1325, Asn1340, Asn1354, and Asn1368 each carry an N-linked (GlcNAc...) asparagine glycan. A sulfotyrosine mark is found at Tyr1382 and Tyr1385. The Nucleophile; for sucrase activity role is filled by Asp1394. Glu1397 functions as the For sucrase activity in the catalytic mechanism. A glycan (N-linked (GlcNAc...) asparagine) is linked at Asn1403. Residue Asp1500 is the Proton donor; for sucrase activity of the active site. Residues Asn1535, Asn1572, Asn1748, Asn1763, and Asn1799 are each glycosylated (N-linked (GlcNAc...) asparagine).

Belongs to the glycosyl hydrolase 31 family. In terms of assembly, the resulting sucrase and isomaltase subunits stay associated with one another in a complex by non-covalent linkages. In terms of processing, the precursor is proteolytically cleaved when exposed to pancreatic proteases in the intestinal lumen. Post-translationally, N- and O-glycosylated. Sulfated.

It localises to the apical cell membrane. It catalyses the reaction Hydrolysis of sucrose and maltose by an alpha-D-glucosidase-type action.. The enzyme catalyses Hydrolysis of (1-&gt;6)-alpha-D-glucosidic linkages in some oligosaccharides produced from starch and glycogen by alpha-amylase, and in isomaltose.. Functionally, plays an important role in the final stage of carbohydrate digestion. Isomaltase activity is specific for both alpha-1,4- and alpha-1,6-oligosaccharides. This chain is Sucrase-isomaltase, intestinal (SI), found in Oryctolagus cuniculus (Rabbit).